The primary structure comprises 72 residues: Phaiodotoxin-2 (72 aa).

An LCN-type CS-alpha/beta domain is found at 1–72 (KFIRHKDESF…CFGALESKCA (72 aa)). Intrachain disulfides connect cysteine 13–cysteine 38, cysteine 23–cysteine 50, cysteine 27–cysteine 52, and cysteine 63–cysteine 71.

It belongs to the long (4 C-C) scorpion toxin superfamily. Sodium channel inhibitor family. As to expression, expressed by the venom gland.

Its subcellular location is the secreted. Sodium channel (Nav) specific neurotoxin. This chain is Phaiodotoxin-2, found in Anuroctonus phaiodactylus (Mafia scorpion).